Consider the following 591-residue polypeptide: Uncoordinated protein 58 (591 aa).

The tract at residues 1-24 (MFFYSPNVAPQPSSTSHRRPTLTH) is disordered. The chain crosses the membrane as a helical span at residues 184–204 (VILVSVLIGYLCLGAWILMLL). An N-linked (GlcNAc...) asparagine glycan is attached at Asn-226. Helical transmembrane passes span 289 to 309 (TFPTAILYVLTVLTTCGYGEV), 318 to 338 (VFSVAFALVGIPLMFITAADI), 400 to 420 (PIGAYVSCICIYCSIGSAMFI), 428 to 448 (FIHAFHFGFNLIVTVGLGDIV), and 453 to 473 (IFLSLIVAFVIVGLSVVTMCV).

The protein belongs to the two pore domain potassium channel (TC 1.A.1.8) family.

The protein localises to the membrane. Functionally, has a role in mobility, possibly in the transport of potassium in muscles. This chain is Uncoordinated protein 58, found in Caenorhabditis elegans.